A 701-amino-acid chain; its full sequence is Octapeptide-repeat antigen (701 aa).

N40, N41, N76, N111, N127, N139, N181, N189, N311, N334, N344, N477, and N557 each carry an N-linked (GlcNAc...) asparagine glycan. Positions 120-140 (IENEEKSNGSRKSSNKQKYNE) are disordered. Residues 641–701 (LSGSSTGSMN…IKSGSKDHIK (61 aa)) are disordered. Residues 642–655 (SGSSTGSMNNGKSG) are compositionally biased toward low complexity. Repeat copies occupy residues 653 to 660 (KSGSKSDI), 661 to 668 (KGGSKDDI), 669 to 676 (KSGSKDDI), 677 to 684 (KSGSKADI), 685 to 692 (KSGSKDDI), and 693 to 700 (KSGSKDHI). The 6 X 8 AA approximate tandem repeats stretch occupies residues 653 to 700 (KSGSKSDIKGGSKDDIKSGSKDDIKSGSKADIKSGSKDDIKSGSKDHI). A compositionally biased stretch (basic and acidic residues) spans 656 to 701 (SKSDIKGGSKDDIKSGSKDDIKSGSKADIKSGSKDDIKSGSKDHIK).

It belongs to the ATP-dependent AMP-binding enzyme family.

The protein localises to the parasitophorous vacuole. The sequence is that of Octapeptide-repeat antigen from Plasmodium falciparum (isolate NF7 / Ghana).